The following is a 1002-amino-acid chain: Calmin (1002 aa).

Residues 1 to 288 form an actin-binding region; sequence MAAHEWDWFQ…IMTYVAQFLE (288 aa). Residues 32 to 139 form the Calponin-homology (CH) 1 domain; it reads NVQKRTFTRW…LIWNIILFFQ (108 aa). Low complexity predominate over residues 149–168; it reads RNSPSSSLSPGSGGTDSDSS. Residues 149–180 are disordered; sequence RNSPSSSLSPGSGGTDSDSSFPPTPTAERSVA. Positions 187–291 constitute a Calponin-homology (CH) 2 domain; sequence RKAIKALLAW…YVAQFLERFP (105 aa). A phosphoserine mark is found at S301 and S402. Disordered stretches follow at residues 389–418, 500–532, 581–716, and 749–911; these read QGGP…GRSN, NNNS…GENT, NKVP…SPPL, and DLKN…DSSI. Residues 396–409 show a composition bias toward low complexity; the sequence is SDISEPSPESSILS. A compositionally biased stretch (polar residues) spans 500–509; it reads NNNSQSSSCN. Over residues 585 to 606 the composition is skewed to basic and acidic residues; sequence SPHETKPDEDAEAFENHAEKLG. The segment covering 607 to 617 has biased composition (basic residues); sequence KRSIKSAHKKK. Basic and acidic residues-rich tracts occupy residues 618–635 and 650–659; these read DSPE…HQDS and PVDKKPEVHE. Phosphoserine is present on S619. Low complexity predominate over residues 681–697; it reads GVGEELSSSPPSSCVSL. The residue at position 699 (T699) is a Phosphothreonine. S713 and S769 each carry phosphoserine. Residues 776-794 are compositionally biased toward low complexity; sequence GSQSSSSSSVPGESLPSAS. The segment covering 818 to 834 has biased composition (basic and acidic residues); that stretch reads PHEDHQQRETKENDPMD. A compositionally biased stretch (polar residues) spans 835-846; the sequence is SHQSQESPNLEN. S838 and S841 each carry phosphoserine. A compositionally biased stretch (basic and acidic residues) spans 854 to 863; sequence NVTKESISSK. Over residues 898-910 the composition is skewed to polar residues; sequence YSIPSRTSHSDSS. The residue at position 907 (S907) is a Phosphoserine. A helical; Anchor for type IV membrane protein membrane pass occupies residues 977–997; it reads MMYFILFLWLLVYCLLLFPQL.

In terms of tissue distribution, widely expressed at intermediate level.

It localises to the membrane. This Homo sapiens (Human) protein is Calmin (CLMN).